A 1585-amino-acid chain; its full sequence is Maestro heat-like repeat-containing protein family member 2B (1585 aa).

HEAT repeat units lie at residues 28–65, 228–263, 272–309, 310–346, 405–445, 531–569, 572–611, 662–699, 777–819, 964–1001, 1021–1059, 1112–1151, 1157–1195, 1258–1295, and 1363–1402; these read VNKE…DMRD, GYAL…AAVL, LRRS…LAHS, NPGE…ADEP, TLNR…LVIG, IGLL…STVL, TMLL…NSTE, ENHL…LTKT, SYKE…LKPQ, HLEV…KFIP, PTCT…HMPV, ASSG…VISM, GLYP…QGEQ, GVIL…EPIL, and CESL…EQDD.

In terms of assembly, found in a complex at least composed of MROH2B, PRKACA isoform 2 and TCP11. Interacts with PRKACA. Interacts with TCP11. In terms of processing, constitutively phosphorylated on serine and threonine residues in acrosomal region of the sperm head, midpiece and flagellar regions of noncapacitated spermatozoa. Phosphorylation on tyrosine residues increases upon sperm capacitation within the acrosomal and tail regions in a protein kinase A (PKA)-dependent signaling pathway.

Its subcellular location is the cytoplasm. The protein localises to the cytoplasmic vesicle. It localises to the secretory vesicle. The protein resides in the acrosome. It is found in the cell projection. Its subcellular location is the cilium. The protein localises to the flagellum. In terms of biological role, may play a role in the process of sperm capacitation. The chain is Maestro heat-like repeat-containing protein family member 2B from Homo sapiens (Human).